The primary structure comprises 92 residues: Small ribosomal subunit protein bS20 (92 aa).

It belongs to the bacterial ribosomal protein bS20 family.

Binds directly to 16S ribosomal RNA. The sequence is that of Small ribosomal subunit protein bS20 from Persephonella marina (strain DSM 14350 / EX-H1).